An 857-amino-acid polypeptide reads, in one-letter code: Protein app1 (857 aa).

The ADF-H domain maps to Asp6–Ala133. Disordered stretches follow at residues Ala167–Arg562, Glu585–Arg622, and Gln693–Thr723. Basic and acidic residues predominate over residues Lys193–Ser204. The segment covering Lys205–Asn217 has biased composition (low complexity). Residues Ala229–Pro240 are compositionally biased toward basic and acidic residues. Polar residues-rich tracts occupy residues Ser276–Pro295, Pro371–Thr385, Lys399–Gln409, Lys443–Gly452, and Ser498–Thr511. Over residues Val522 to Gln561 the composition is skewed to low complexity. Pro residues-rich tracts occupy residues Pro587–Pro596 and Pro602–Pro611. A compositionally biased stretch (low complexity) spans Val612–Arg622. 2 consecutive SH3 domains span residues Pro725–Pro785 and Gly800–Ile857.

This Schizosaccharomyces pombe (strain 972 / ATCC 24843) (Fission yeast) protein is Protein app1 (app1).